The following is a 280-amino-acid chain: Phosphatidylserine decarboxylase proenzyme (280 aa).

Catalysis depends on charge relay system; for autoendoproteolytic cleavage activity residues aspartate 88, histidine 144, and serine 247. Serine 247 functions as the Schiff-base intermediate with substrate; via pyruvic acid; for decarboxylase activity in the catalytic mechanism. Serine 247 bears the Pyruvic acid (Ser); by autocatalysis mark.

The protein belongs to the phosphatidylserine decarboxylase family. PSD-B subfamily. Prokaryotic type I sub-subfamily. Heterodimer of a large membrane-associated beta subunit and a small pyruvoyl-containing alpha subunit. Pyruvate is required as a cofactor. In terms of processing, is synthesized initially as an inactive proenzyme. Formation of the active enzyme involves a self-maturation process in which the active site pyruvoyl group is generated from an internal serine residue via an autocatalytic post-translational modification. Two non-identical subunits are generated from the proenzyme in this reaction, and the pyruvate is formed at the N-terminus of the alpha chain, which is derived from the carboxyl end of the proenzyme. The autoendoproteolytic cleavage occurs by a canonical serine protease mechanism, in which the side chain hydroxyl group of the serine supplies its oxygen atom to form the C-terminus of the beta chain, while the remainder of the serine residue undergoes an oxidative deamination to produce ammonia and the pyruvoyl prosthetic group on the alpha chain. During this reaction, the Ser that is part of the protease active site of the proenzyme becomes the pyruvoyl prosthetic group, which constitutes an essential element of the active site of the mature decarboxylase.

The protein resides in the cell membrane. The catalysed reaction is a 1,2-diacyl-sn-glycero-3-phospho-L-serine + H(+) = a 1,2-diacyl-sn-glycero-3-phosphoethanolamine + CO2. It participates in phospholipid metabolism; phosphatidylethanolamine biosynthesis; phosphatidylethanolamine from CDP-diacylglycerol: step 2/2. Catalyzes the formation of phosphatidylethanolamine (PtdEtn) from phosphatidylserine (PtdSer). The chain is Phosphatidylserine decarboxylase proenzyme from Xanthomonas axonopodis pv. citri (strain 306).